A 304-amino-acid polypeptide reads, in one-letter code: Dihydroorotate dehydrogenase B (NAD(+)), catalytic subunit (304 aa).

FMN is bound by residues Ser22 and Lys46–Gly47. Substrate-binding positions include Lys46 and Asn70 to Leu74. FMN is bound by residues Asn100 and Asn128. A substrate-binding site is contributed by Asn128. The Nucleophile role is filled by Cys131. FMN contacts are provided by Lys166 and Ile192. Substrate is bound at residue Asn193 to Thr194. Residues Gly218, Gly244–Gly245, and Gly266–Thr267 each bind FMN.

Belongs to the dihydroorotate dehydrogenase family. Type 1 subfamily. In terms of assembly, heterotetramer of 2 PyrK and 2 PyrD type B subunits. However, the metal reductase complex seems to be composed of a heterooctamer of 4 PyrK and 4 PyrD subunits. It depends on FMN as a cofactor.

It is found in the cytoplasm. The catalysed reaction is (S)-dihydroorotate + NAD(+) = orotate + NADH + H(+). Its pathway is pyrimidine metabolism; UMP biosynthesis via de novo pathway; orotate from (S)-dihydroorotate (NAD(+) route): step 1/1. Its function is as follows. Catalyzes the conversion of dihydroorotate to orotate with NAD(+) as electron acceptor. In terms of biological role, together with PyrK, also forms a metal reductase complex able to reduce Fe(III)-chelates to Fe(II)-chelates, as well as soluble Cr(VI) and U(VI), using NADH as electron donor. To a lesser extent, can also use NADPH as an electron donor. Is unable to reduce riboflavin and FMN with NADH as electron donor. May have an in vivo role in metal reduction in D.reducens, which is an organism capable of reducing contaminant heavy metals and radionuclides. The polypeptide is Dihydroorotate dehydrogenase B (NAD(+)), catalytic subunit (pyrD) (Desulforamulus reducens (strain ATCC BAA-1160 / DSM 100696 / MI-1) (Desulfotomaculum reducens)).